The following is a 504-amino-acid chain: Maturase K (504 aa).

This sequence belongs to the intron maturase 2 family. MatK subfamily.

It localises to the plastid. Its subcellular location is the chloroplast. In terms of biological role, usually encoded in the trnK tRNA gene intron. Probably assists in splicing its own and other chloroplast group II introns. This chain is Maturase K, found in Quercus petraea (Durmast oak).